Reading from the N-terminus, the 83-residue chain is Cell division topological specificity factor (83 aa).

It belongs to the MinE family.

Functionally, prevents the cell division inhibition by proteins MinC and MinD at internal division sites while permitting inhibition at polar sites. This ensures cell division at the proper site by restricting the formation of a division septum at the midpoint of the long axis of the cell. This Bordetella parapertussis (strain 12822 / ATCC BAA-587 / NCTC 13253) protein is Cell division topological specificity factor.